A 225-amino-acid chain; its full sequence is Phosphoserine phosphatase (225 aa).

Methionine 1 carries the post-translational modification N-acetylmethionine. The active-site Nucleophile is aspartate 20. 2 residues coordinate Mg(2+): aspartate 20 and aspartate 22. Residue 20-22 participates in L-serine binding; the sequence is DVD. Aspartate 22 acts as the Proton donor in catalysis. Methionine 52 is an O-phospho-L-serine binding site. Glycine 53 lines the phosphate pocket. L-serine is bound by residues 109–111 and lysine 158; that span reads SGG. O-phospho-L-serine-binding positions include 109 to 111 and lysine 158; that span reads SGG. Aspartate 179 provides a ligand contact to Mg(2+). Position 182 (threonine 182) interacts with O-phospho-L-serine. Residue threonine 182 participates in phosphate binding.

The protein belongs to the HAD-like hydrolase superfamily. SerB family. As to quaternary structure, homodimer. Mg(2+) serves as cofactor.

It is found in the cytoplasm. The protein localises to the cytosol. The enzyme catalyses O-phospho-L-serine + H2O = L-serine + phosphate. The catalysed reaction is O-phospho-D-serine + H2O = D-serine + phosphate. Its pathway is amino-acid biosynthesis; L-serine biosynthesis; L-serine from 3-phospho-D-glycerate: step 3/3. In terms of biological role, catalyzes the last irreversible step in the biosynthesis of L-serine from carbohydrates, the dephosphorylation of O-phospho-L-serine to L-serine. L-serine can then be used in protein synthesis, to produce other amino acids, in nucleotide metabolism or in glutathione synthesis, or can be racemized to D-serine, a neuromodulator. May also act on O-phospho-D-serine. The sequence is that of Phosphoserine phosphatase from Bos taurus (Bovine).